The chain runs to 584 residues: Protein phosphatase 2A scaffold subunit (584 aa).

HEAT repeat units lie at residues 7 to 45 (ESDD…ALGP), 46 to 84 (ERTR…FVGG), 86 to 123 (EHAV…EIPT), 168 to 206 (LRKT…VKSE), 207 to 239 (ILPL…MLTN), 240 to 278 (EENI…SMGT), 279 to 317 (EITK…LLTK), 318 to 356 (EMNI…IYGK), 358 to 395 (DTLT…VIGI), 397 to 434 (MLSQ…QLGV), 441 to 479 (LGNL…AKNN), 480 to 512 (IIPK…VVGG), 513 to 551 (DVIS…LLDS), and 553 to 584 (IVQS…LQLC).

This sequence belongs to the phosphatase 2A regulatory subunit A family. As to quaternary structure, component of the Sca1 complex composed of at least gefA, gefH, scaA, phr, and the protein phosphatase 2A subunits pppA and pho2B.

The protein resides in the cytoplasm. It is found in the cytosol. It localises to the cell membrane. Scaffolding molecule which may coordinate the assembly of the catalytic subunit and a variable regulatory B subunit. Component of the Sca1 complex, a regulator of cell motility, chemotaxis and signal relay. The Sca1 complex is recruited to the plasma membrane in a chemoattractant- and F-actin-dependent manner and is enriched at the leading edge of chemotaxing cells where it regulates F-actin dynamics and signal relay by controlling the activation of rasC and the downstream target of rapamycin complex 2 (TORC2)-Akt/protein kinase B (PKB) pathway. This chain is Protein phosphatase 2A scaffold subunit (pppA), found in Dictyostelium discoideum (Social amoeba).